A 288-amino-acid polypeptide reads, in one-letter code: Release factor glutamine methyltransferase (288 aa).

2 residues coordinate S-adenosyl-L-methionine: aspartate 142 and asparagine 186. 186-189 (NPPY) contributes to the substrate binding site.

Belongs to the protein N5-glutamine methyltransferase family. PrmC subfamily.

The enzyme catalyses L-glutaminyl-[peptide chain release factor] + S-adenosyl-L-methionine = N(5)-methyl-L-glutaminyl-[peptide chain release factor] + S-adenosyl-L-homocysteine + H(+). Methylates the class 1 translation termination release factors RF1/PrfA and RF2/PrfB on the glutamine residue of the universally conserved GGQ motif. This Mycobacterium leprae (strain TN) protein is Release factor glutamine methyltransferase.